We begin with the raw amino-acid sequence, 356 residues long: NADH-quinone oxidoreductase subunit H (356 aa).

8 helical membrane passes run Ile18–Ile38, Gly87–Ile107, Val120–Gly140, Ile166–Val186, Ile205–Leu225, Ala265–Ile285, Trp292–Met312, and Phe333–Ile353.

The protein belongs to the complex I subunit 1 family. As to quaternary structure, NDH-1 is composed of 14 different subunits. Subunits NuoA, H, J, K, L, M, N constitute the membrane sector of the complex.

The protein localises to the cell inner membrane. It catalyses the reaction a quinone + NADH + 5 H(+)(in) = a quinol + NAD(+) + 4 H(+)(out). In terms of biological role, NDH-1 shuttles electrons from NADH, via FMN and iron-sulfur (Fe-S) centers, to quinones in the respiratory chain. The immediate electron acceptor for the enzyme in this species is believed to be ubiquinone. Couples the redox reaction to proton translocation (for every two electrons transferred, four hydrogen ions are translocated across the cytoplasmic membrane), and thus conserves the redox energy in a proton gradient. This subunit may bind ubiquinone. This is NADH-quinone oxidoreductase subunit H from Bradyrhizobium sp. (strain ORS 278).